We begin with the raw amino-acid sequence, 107 residues long: Large ribosomal subunit protein uL24 (107 aa).

It belongs to the universal ribosomal protein uL24 family. In terms of assembly, part of the 50S ribosomal subunit.

Its function is as follows. One of two assembly initiator proteins, it binds directly to the 5'-end of the 23S rRNA, where it nucleates assembly of the 50S subunit. In terms of biological role, one of the proteins that surrounds the polypeptide exit tunnel on the outside of the subunit. This is Large ribosomal subunit protein uL24 from Carboxydothermus hydrogenoformans (strain ATCC BAA-161 / DSM 6008 / Z-2901).